The primary structure comprises 415 residues: Gamma-glutamyl phosphate reductase (415 aa).

It belongs to the gamma-glutamyl phosphate reductase family.

Its subcellular location is the cytoplasm. The enzyme catalyses L-glutamate 5-semialdehyde + phosphate + NADP(+) = L-glutamyl 5-phosphate + NADPH + H(+). It functions in the pathway amino-acid biosynthesis; L-proline biosynthesis; L-glutamate 5-semialdehyde from L-glutamate: step 2/2. Catalyzes the NADPH-dependent reduction of L-glutamate 5-phosphate into L-glutamate 5-semialdehyde and phosphate. The product spontaneously undergoes cyclization to form 1-pyrroline-5-carboxylate. This is Gamma-glutamyl phosphate reductase from Cutibacterium acnes (strain DSM 16379 / KPA171202) (Propionibacterium acnes).